Here is a 137-residue protein sequence, read N- to C-terminus: Nucleoside diphosphate kinase (137 aa).

6 residues coordinate ATP: lysine 9, phenylalanine 57, arginine 85, threonine 91, arginine 102, and asparagine 112. Histidine 115 acts as the Pros-phosphohistidine intermediate in catalysis.

It belongs to the NDK family. Homotetramer. Mg(2+) is required as a cofactor.

The protein resides in the cytoplasm. It carries out the reaction a 2'-deoxyribonucleoside 5'-diphosphate + ATP = a 2'-deoxyribonucleoside 5'-triphosphate + ADP. The catalysed reaction is a ribonucleoside 5'-diphosphate + ATP = a ribonucleoside 5'-triphosphate + ADP. Functionally, major role in the synthesis of nucleoside triphosphates other than ATP. The ATP gamma phosphate is transferred to the NDP beta phosphate via a ping-pong mechanism, using a phosphorylated active-site intermediate. The sequence is that of Nucleoside diphosphate kinase from Geotalea uraniireducens (strain Rf4) (Geobacter uraniireducens).